A 195-amino-acid polypeptide reads, in one-letter code: Imidazoleglycerol-phosphate dehydratase (195 aa).

Belongs to the imidazoleglycerol-phosphate dehydratase family.

It localises to the cytoplasm. The catalysed reaction is D-erythro-1-(imidazol-4-yl)glycerol 3-phosphate = 3-(imidazol-4-yl)-2-oxopropyl phosphate + H2O. It participates in amino-acid biosynthesis; L-histidine biosynthesis; L-histidine from 5-phospho-alpha-D-ribose 1-diphosphate: step 6/9. The sequence is that of Imidazoleglycerol-phosphate dehydratase from Deinococcus radiodurans (strain ATCC 13939 / DSM 20539 / JCM 16871 / CCUG 27074 / LMG 4051 / NBRC 15346 / NCIMB 9279 / VKM B-1422 / R1).